Here is a 282-residue protein sequence, read N- to C-terminus: Undecaprenyl-diphosphatase (282 aa).

Helical transmembrane passes span 40–60 (GAAFTAIIQIGTLAAVLMYFW), 85–105 (ARMGWMIAAGTIPIVVFGLLF), 115–135 (SLYWISGALIGLALLLSLAEW), 153–173 (IGWKEALLIGLAQSIALIPGS), 193–213 (AARFSFLLSLPAVFAAGIFQL), 230–250 (LAAATFTSAVVGYLSIAFLLS), and 258–278 (TIFIIYRLLAGILLLLLLSTG).

The protein belongs to the UppP family.

It is found in the cell inner membrane. It catalyses the reaction di-trans,octa-cis-undecaprenyl diphosphate + H2O = di-trans,octa-cis-undecaprenyl phosphate + phosphate + H(+). Catalyzes the dephosphorylation of undecaprenyl diphosphate (UPP). Confers resistance to bacitracin. The protein is Undecaprenyl-diphosphatase of Chlorobium phaeovibrioides (strain DSM 265 / 1930) (Prosthecochloris vibrioformis (strain DSM 265)).